The chain runs to 312 residues: MIEFEKPIITKIDENKDYGKFVIEPLERGYGTTLGNSLRRVLLSSLPGAAVTSIKIDGVLHEFDTVPGVREDVMQIILNIKGLAVKSYVEDEKTIELDVQGPAEVTAGDILTDSDIEIVNPDHYLFTIAEGASFQATMTVSTNRGYVPAEENKKDDAPVGTLAVDSIYTPVKKVNYQVEPARVGSNDGFDKLTIEIVTNGTIIPEDALGLSARILIEHLNLFTDLTDVAKATDVMKETEKVNDEKLLDRTIEELDLSVRSYNCLKRAGINTVHDLTEKTEPEMMKVRNLGRKSLEEVKVKLADLGLGLKNDK.

The alpha N-terminal domain (alpha-NTD) stretch occupies residues 1 to 226 (MIEFEKPIIT…EHLNLFTDLT (226 aa)). The tract at residues 242 to 312 (NDEKLLDRTI…DLGLGLKNDK (71 aa)) is alpha C-terminal domain (alpha-CTD).

This sequence belongs to the RNA polymerase alpha chain family. As to quaternary structure, homodimer. The RNAP catalytic core consists of 2 alpha, 1 beta, 1 beta' and 1 omega subunit. When a sigma factor is associated with the core the holoenzyme is formed, which can initiate transcription.

It carries out the reaction RNA(n) + a ribonucleoside 5'-triphosphate = RNA(n+1) + diphosphate. Functionally, DNA-dependent RNA polymerase catalyzes the transcription of DNA into RNA using the four ribonucleoside triphosphates as substrates. The sequence is that of DNA-directed RNA polymerase subunit alpha from Streptococcus thermophilus (strain CNRZ 1066).